The following is an 816-amino-acid chain: Probable transcriptional regulator SLK2 (816 aa).

Disordered stretches follow at residues 133–153 (HDPSVQLGGSSATSLPTSQTN) and 166–189 (SFFQDPNNLTQARKKPRLDSKQDD). 2 stretches are compositionally biased toward polar residues: residues 139-153 (LGGSSATSLPTSQTN) and 166-176 (SFFQDPNNLTQ). A dimerization region spans residues 307–554 (PSESSIVYWR…DQKVGPIEAL (248 aa)). Positions 316–330 (RKFVTEYFSPRAKKR) match the Nuclear localization signal motif. Composition is skewed to polar residues over residues 644–662 (IQQEPSRNRSASPSYQGTS) and 672–711 (PSISGVSSHLSPQRQMPSSSYNGSTQQYHQQPPSCSSGNQ). The interval 644 to 711 (IQQEPSRNRS…QPPSCSSGNQ (68 aa)) is disordered.

This sequence belongs to the adn1/SEU family. In terms of assembly, forms corepressor complexes with LUH; LUH is the transcription repressor subunit and SLK2 the specific DNA-binding adapters. As to expression, expressed in young flower meristems, ovules and the carpel margin meristem.

It is found in the nucleus. Probable transcription regulator that functions in the development of the carpel margin meristem similarly to SEUSS (SEU). In association with SEU, supports organ development from meristematic regions by facilitating auxin response and thus organ initiation, and by sustaining meristematic potential through the maintenance of PHABULOSA expression. DNA-binding adapter subunit of the SEU-SLK2 transcriptional corepressor of abiotic stress (e.g. salt and osmotic stress) response genes. This chain is Probable transcriptional regulator SLK2 (SLK2), found in Arabidopsis thaliana (Mouse-ear cress).